The primary structure comprises 313 residues: 4-hydroxy-3-methylbut-2-enyl diphosphate reductase (313 aa).

Cys-12 contacts [4Fe-4S] cluster. Residues His-41 and His-74 each coordinate (2E)-4-hydroxy-3-methylbut-2-enyl diphosphate. The dimethylallyl diphosphate site is built by His-41 and His-74. Isopentenyl diphosphate is bound by residues His-41 and His-74. Cys-96 is a binding site for [4Fe-4S] cluster. A (2E)-4-hydroxy-3-methylbut-2-enyl diphosphate-binding site is contributed by His-124. His-124 is a dimethylallyl diphosphate binding site. His-124 serves as a coordination point for isopentenyl diphosphate. Glu-126 (proton donor) is an active-site residue. Thr-167 serves as a coordination point for (2E)-4-hydroxy-3-methylbut-2-enyl diphosphate. Cys-197 contributes to the [4Fe-4S] cluster binding site. 4 residues coordinate (2E)-4-hydroxy-3-methylbut-2-enyl diphosphate: Ser-225, Ser-226, Asn-227, and Ser-269. Residues Ser-225, Ser-226, Asn-227, and Ser-269 each coordinate dimethylallyl diphosphate. Isopentenyl diphosphate is bound by residues Ser-225, Ser-226, Asn-227, and Ser-269.

This sequence belongs to the IspH family. The cofactor is [4Fe-4S] cluster.

The catalysed reaction is isopentenyl diphosphate + 2 oxidized [2Fe-2S]-[ferredoxin] + H2O = (2E)-4-hydroxy-3-methylbut-2-enyl diphosphate + 2 reduced [2Fe-2S]-[ferredoxin] + 2 H(+). The enzyme catalyses dimethylallyl diphosphate + 2 oxidized [2Fe-2S]-[ferredoxin] + H2O = (2E)-4-hydroxy-3-methylbut-2-enyl diphosphate + 2 reduced [2Fe-2S]-[ferredoxin] + 2 H(+). Its pathway is isoprenoid biosynthesis; dimethylallyl diphosphate biosynthesis; dimethylallyl diphosphate from (2E)-4-hydroxy-3-methylbutenyl diphosphate: step 1/1. It functions in the pathway isoprenoid biosynthesis; isopentenyl diphosphate biosynthesis via DXP pathway; isopentenyl diphosphate from 1-deoxy-D-xylulose 5-phosphate: step 6/6. Functionally, catalyzes the conversion of 1-hydroxy-2-methyl-2-(E)-butenyl 4-diphosphate (HMBPP) into a mixture of isopentenyl diphosphate (IPP) and dimethylallyl diphosphate (DMAPP). Acts in the terminal step of the DOXP/MEP pathway for isoprenoid precursor biosynthesis. The polypeptide is 4-hydroxy-3-methylbut-2-enyl diphosphate reductase (Baumannia cicadellinicola subsp. Homalodisca coagulata).